We begin with the raw amino-acid sequence, 310 residues long: Putative carbonic anhydrase 5 (310 aa).

The N-terminal stretch at 1 to 20 is a signal peptide; that stretch reads MPSHLLVLSLLVALLVVVSC. The Alpha-carbonic anhydrase domain occupies 26–280; sequence HGWGYDENNG…LNGRRIQYRP (255 aa). Zn(2+)-binding residues include His117, His119, and His142. 223-224 lines the substrate pocket; sequence TT.

The protein belongs to the alpha-carbonic anhydrase family.

Its subcellular location is the secreted. It carries out the reaction hydrogencarbonate + H(+) = CO2 + H2O. Its function is as follows. Reversible hydration of carbon dioxide. This Caenorhabditis elegans protein is Putative carbonic anhydrase 5 (cah-5).